Reading from the N-terminus, the 552-residue chain is MTKYIFITGGVVSSLGKGIAASSLAAILEARGLKVTLTKLDPYINVDPGTMSPFQHGEVFVTEDGAETDLDLGHYERFVRTTMGRANSFTTGQIYENVIRKERRGEYLGATVQVIPHITDEIKRGIRLSAEGYDVALIEIGGTVGDIESLPFLEAIRQMRVDLGEERSLFIHLTLVPYISSAGELKTKPTQHSVKELRTIGIQPDILICRSDRPIPKSECRKIALFTNVQEDAVIASVDADTIYRIPALLHEQQLDEIVVRKLRLDAGPADLSEWHRVVDALQNPERSVTVAMVGKYVNHSDAYKSLSEALVHAGIHTRTRVDIRFIESEEIEDHGTGALEGVDAILVPGGFGERGIEGKIAAVKYAREHRVPYLGICLGMQVAVIEFARNVAGLEGAHSTEFLPSSPHPVIALITEWKTEAGGIEYRSGDSDLGGTMRLGGQKCRLVPNTLAHATYGKDVITERHRHRYEFNNHYLKTLEAAGLRVSGKSLDGRLVEMVEIPEHPWFLACQFHPEFTSTPRGGHPLFSGFVRAARARSEGTSPPESGGAQP.

The interval 1–265 (MTKYIFITGG…DEIVVRKLRL (265 aa)) is amidoligase domain. Position 13 (Ser-13) interacts with CTP. Ser-13 provides a ligand contact to UTP. ATP contacts are provided by residues 14–19 (SLGKGI) and Asp-71. Asp-71 and Glu-139 together coordinate Mg(2+). Residues 146–148 (DIE), 186–191 (KTKPTQ), and Lys-222 contribute to the CTP site. Residues 186–191 (KTKPTQ) and Lys-222 each bind UTP. Residues 290–541 (TVAMVGKYVN…VRAARARSEG (252 aa)) form the Glutamine amidotransferase type-1 domain. Gly-351 provides a ligand contact to L-glutamine. Cys-378 functions as the Nucleophile; for glutamine hydrolysis in the catalytic mechanism. L-glutamine-binding positions include 379 to 382 (LGMQ), Glu-402, and Arg-469. Active-site residues include His-514 and Glu-516.

It belongs to the CTP synthase family. As to quaternary structure, homotetramer.

The catalysed reaction is UTP + L-glutamine + ATP + H2O = CTP + L-glutamate + ADP + phosphate + 2 H(+). The enzyme catalyses L-glutamine + H2O = L-glutamate + NH4(+). It catalyses the reaction UTP + NH4(+) + ATP = CTP + ADP + phosphate + 2 H(+). Its pathway is pyrimidine metabolism; CTP biosynthesis via de novo pathway; CTP from UDP: step 2/2. Allosterically activated by GTP, when glutamine is the substrate; GTP has no effect on the reaction when ammonia is the substrate. The allosteric effector GTP functions by stabilizing the protein conformation that binds the tetrahedral intermediate(s) formed during glutamine hydrolysis. Inhibited by the product CTP, via allosteric rather than competitive inhibition. Its function is as follows. Catalyzes the ATP-dependent amination of UTP to CTP with either L-glutamine or ammonia as the source of nitrogen. Regulates intracellular CTP levels through interactions with the four ribonucleotide triphosphates. The polypeptide is CTP synthase (Methylococcus capsulatus (strain ATCC 33009 / NCIMB 11132 / Bath)).